Reading from the N-terminus, the 236-residue chain is uncharacterized protein (236 aa).

Positions 3-208 constitute a DPCK domain; it reads ILGLTGSIAT…PSYFFTLLCL (206 aa). ATP is bound at residue 8–15; the sequence is GSIATGKS. 2 positions are modified to phosphoserine: S82 and S86.

Belongs to the CoaE family.

The protein localises to the cytoplasm. This is an uncharacterized protein from Schizosaccharomyces pombe (strain 972 / ATCC 24843) (Fission yeast).